The sequence spans 101 residues: DNA-binding protein Fis (101 aa).

A DNA-binding region (H-T-H motif) is located at residues 77–96 (QTRAANMLGINRGTLRKKLK).

This sequence belongs to the transcriptional regulatory Fis family. In terms of assembly, homodimer.

Its function is as follows. Activates ribosomal RNA transcription. Plays a direct role in upstream activation of rRNA promoters. In Shewanella amazonensis (strain ATCC BAA-1098 / SB2B), this protein is DNA-binding protein Fis.